Consider the following 316-residue polypeptide: MKISYLDFEQSVAELDAKVEELHALNQPGIADDISRLEVKARKELQRIYSKLGAWQTVQVARHPQRPYTMDYVQALFTEVQVLAGDRAFADDQAIIGGLARFNGQPIVWMGHQKGRDTKEKIQRNFGMPRPEGYRKALRLLRLAERFALPVFTFIDTPGAYPGIGAEERGQSEAIARNLAVMSDLAVPIICTVIGEGGSGGALAIGVGDRMLMLEYGVYSVISPEGCASILWKNAAMAAEAAETLGITARRLQGMGLVDEVLAEPLGGAHRDPEAVFALARERFAHHLQELQAMDTSKLLTTRYERLMHYGVVGAA.

The 251-residue stretch at 40–290 (KARKELQRIY…RERFAHHLQE (251 aa)) folds into the CoA carboxyltransferase C-terminal domain.

This sequence belongs to the AccA family. In terms of assembly, acetyl-CoA carboxylase is a heterohexamer composed of biotin carboxyl carrier protein (AccB), biotin carboxylase (AccC) and two subunits each of ACCase subunit alpha (AccA) and ACCase subunit beta (AccD).

The protein localises to the cytoplasm. It carries out the reaction N(6)-carboxybiotinyl-L-lysyl-[protein] + acetyl-CoA = N(6)-biotinyl-L-lysyl-[protein] + malonyl-CoA. Its pathway is lipid metabolism; malonyl-CoA biosynthesis; malonyl-CoA from acetyl-CoA: step 1/1. In terms of biological role, component of the acetyl coenzyme A carboxylase (ACC) complex. First, biotin carboxylase catalyzes the carboxylation of biotin on its carrier protein (BCCP) and then the CO(2) group is transferred by the carboxyltransferase to acetyl-CoA to form malonyl-CoA. The chain is Acetyl-coenzyme A carboxylase carboxyl transferase subunit alpha from Acidithiobacillus ferrooxidans (strain ATCC 23270 / DSM 14882 / CIP 104768 / NCIMB 8455) (Ferrobacillus ferrooxidans (strain ATCC 23270)).